A 206-amino-acid polypeptide reads, in one-letter code: Bacterial microcompartment protein trimer-3 (206 aa).

BMC circularly permuted domains follow at residues 2–104 (ELRA…RLAP) and 105–206 (RVVS…DNRG). The short motif at 67-68 (ER) is the Pore gating residues element.

This sequence belongs to the EutL/PduB family. Homotrimerizes to form a pseudohexamer. These stack, with the concave faces together, with the concave faces together, in purified bacterial microcompartments (BMC).

The protein resides in the bacterial microcompartment. Its function is as follows. A minor component of the bacterial microcompartment (BMC) shell. Expression of 5 proteins in E.coli (BMC-H (Hoch_5815), BMC-P (Hoch_5814), and 3 BMC-T (Hoch_5812, Hoch_5816, Hoch_3341)) forms 40 nm artificial BMCs with a molecular mass of 6.5 MDa. One of 2 stacked pseudohexamers in the BMC. There are 20 BMC-T pseudohexamers per BMC, composed of mixed BMC-T1, BMC-T2 and BMC-T3. The shell facets are 20-30 Angstroms thick, with 1 of the stacked BMC-T trimers protruding to the exterior. The stacked trimers may serve as conduits to allow metabolite flux across the protein shell, gated by Arg-68 which contacts Glu-67 in an adjacent subunit; they are flexible enough to play a role in accommodating variations in shell assembly. The sequence is that of Bacterial microcompartment protein trimer-3 from Haliangium ochraceum (strain DSM 14365 / JCM 11303 / SMP-2).